The primary structure comprises 782 residues: Cyclic nucleotide-gated channel beta-3 (782 aa).

2 disordered regions span residues 1 to 111 (MFKS…PKSK) and 147 to 168 (GDIS…PSTQ). Residues 1–213 (MFKSLTIKSN…SIDSYTDRLY (213 aa)) are Cytoplasmic-facing. Composition is skewed to basic and acidic residues over residues 13-25 (KPRE…KQDP) and 57-73 (EESH…KNSL). 2 stretches are compositionally biased toward polar residues: residues 74–83 (RDLTTNPNHQ) and 152–168 (PEAS…PSTQ). Residues 214–237 (LLWLLLVTIAYNWNCWLIPLRLVF) form a helical membrane-spanning segment. Residues 238–244 (PYQTPDN) lie on the Extracellular side of the membrane. Residues 245–265 (THYWFITDITCDIIYLCDMLL) form a helical membrane-spanning segment. Over 266–294 (IQPRLQFIKGGDIMVDSNELKRHYRSSTK) the chain is Cytoplasmic. A helical transmembrane segment spans residues 295-312 (FQLDVASVMPFDVFYLFF). Residues 313 to 315 (GFN) are Extracellular-facing. The chain crosses the membrane as a helical span at residues 316–330 (PVFRMNRILKYTSFF). The Cytoplasmic segment spans residues 331–343 (EFNHHLESIMDKA). The ion conduction pathway stretch occupies residues 343–442 (AYIYRVIRTT…IGQMQDVIGA (100 aa)). Residues 344–366 (YIYRVIRTTGYLLYTLHINACIY) form a helical membrane-spanning segment. Over 367–388 (YWASDYEGIGSTKWVYNGEGNK) the chain is Extracellular. Helical transmembrane passes span 389–415 (YLRC…SFEI) and 416–440 (VFQL…QDVI). A selectivity filter region spans residues 402-405 (TIGG). Topologically, residues 441-782 (GAATANQNNF…TIEVKEKAKQ (342 aa)) are cytoplasmic. Residues 445 to 521 (ANQNNFRISM…SIISKVELFK (77 aa)) form a C-linker region. Positions 525 to 641 (TQMIYDMLLR…LLMKKASVLL (117 aa)) are cyclic nucleotide-binding domain. Gly-586, Glu-587, Arg-599, and Thr-600 together coordinate 3',5'-cyclic GMP. The tract at residues 692–724 (EQTIQKTSENSEEGGGKRREYEDKEREPSEKIL) is disordered. Positions 705–724 (GGGKRREYEDKEREPSEKIL) are enriched in basic and acidic residues.

Belongs to the cyclic nucleotide-gated cation channel (TC 1.A.1.5) family. CNGB3 subfamily. Forms heterotetrameric channels composed of CNGA3 and CNGB3 subunits with 3:1 stoichiometry.

It is found in the cell membrane. The catalysed reaction is Ca(2+)(in) = Ca(2+)(out). The enzyme catalyses Na(+)(in) = Na(+)(out). It catalyses the reaction K(+)(in) = K(+)(out). It carries out the reaction NH4(+)(in) = NH4(+)(out). The catalysed reaction is Rb(+)(in) = Rb(+)(out). The enzyme catalyses Li(+)(in) = Li(+)(out). It catalyses the reaction Cs(+)(in) = Cs(+)(out). Pore-forming subunit of the cone cyclic nucleotide-gated channel. Mediates cone photoresponses at bright light converting transient changes in intracellular cGMP levels into electrical signals. In the dark, cGMP levels are high and keep the channel open enabling a steady inward current carried by Na(+) and Ca(2+) ions that leads to membrane depolarization and neurotransmitter release from synaptic terminals. Upon photon absorption cGMP levels decline leading to channel closure and membrane hyperpolarization that ultimately slows neurotransmitter release and signals the presence of light, the end point of the phototransduction cascade. Conducts cGMP- and cAMP-gated ion currents, with permeability for monovalent and divalent cations. In Canis lupus familiaris (Dog), this protein is Cyclic nucleotide-gated channel beta-3.